A 300-amino-acid polypeptide reads, in one-letter code: Protoheme IX farnesyltransferase (300 aa).

The next 9 helical transmembrane spans lie at 24–44, 48–68, 94–114, 118–138, 146–166, 172–192, 217–237, 239–259, and 278–298; these read VTQL…PGMV, VLLG…AINC, LQIL…LYTF, LTMW…TLLL, IVIG…AVTG, AWIL…VLAL, LHIL…FISG, SGAV…AYAW, and IVYL…RPVI.

It belongs to the UbiA prenyltransferase family. Protoheme IX farnesyltransferase subfamily.

It is found in the cell inner membrane. It carries out the reaction heme b + (2E,6E)-farnesyl diphosphate + H2O = Fe(II)-heme o + diphosphate. Its pathway is porphyrin-containing compound metabolism; heme O biosynthesis; heme O from protoheme: step 1/1. Converts heme B (protoheme IX) to heme O by substitution of the vinyl group on carbon 2 of heme B porphyrin ring with a hydroxyethyl farnesyl side group. In Burkholderia pseudomallei (strain 1106a), this protein is Protoheme IX farnesyltransferase.